A 157-amino-acid chain; its full sequence is Crossover junction endodeoxyribonuclease RuvC (157 aa).

Active-site residues include Asp-7, Glu-67, and Asp-140. Mg(2+) is bound by residues Asp-7, Glu-67, and Asp-140.

It belongs to the RuvC family. As to quaternary structure, homodimer which binds Holliday junction (HJ) DNA. The HJ becomes 2-fold symmetrical on binding to RuvC with unstacked arms; it has a different conformation from HJ DNA in complex with RuvA. In the full resolvosome a probable DNA-RuvA(4)-RuvB(12)-RuvC(2) complex forms which resolves the HJ. Requires Mg(2+) as cofactor.

It localises to the cytoplasm. The enzyme catalyses Endonucleolytic cleavage at a junction such as a reciprocal single-stranded crossover between two homologous DNA duplexes (Holliday junction).. In terms of biological role, the RuvA-RuvB-RuvC complex processes Holliday junction (HJ) DNA during genetic recombination and DNA repair. Endonuclease that resolves HJ intermediates. Cleaves cruciform DNA by making single-stranded nicks across the HJ at symmetrical positions within the homologous arms, yielding a 5'-phosphate and a 3'-hydroxyl group; requires a central core of homology in the junction. The consensus cleavage sequence is 5'-(A/T)TT(C/G)-3'. Cleavage occurs on the 3'-side of the TT dinucleotide at the point of strand exchange. HJ branch migration catalyzed by RuvA-RuvB allows RuvC to scan DNA until it finds its consensus sequence, where it cleaves and resolves the cruciform DNA. The sequence is that of Crossover junction endodeoxyribonuclease RuvC from Thermosipho melanesiensis (strain DSM 12029 / CIP 104789 / BI429).